We begin with the raw amino-acid sequence, 103 residues long: ATP synthase F(0) complex subunit g, mitochondrial (103 aa).

The residue at position 2 (Ala-2) is an N-acetylalanine. 4 positions are modified to N6-acetyllysine: Lys-11, Lys-24, Lys-35, and Lys-54.

Belongs to the ATPase g subunit family. In terms of assembly, component of the ATP synthase complex composed at least of ATP5F1A/subunit alpha, ATP5F1B/subunit beta, ATP5MC1/subunit c (homooctomer), MT-ATP6/subunit a, MT-ATP8/subunit 8, ATP5ME/subunit e, ATP5MF/subunit f, ATP5MG/subunit g, ATP5MK/subunit k, ATP5MJ/subunit j, ATP5F1C/subunit gamma, ATP5F1D/subunit delta, ATP5F1E/subunit epsilon, ATP5PF/subunit F6, ATP5PB/subunit b, ATP5PD/subunit d, ATP5PO/subunit OSCP. ATP synthase complex consists of a soluble F(1) head domain (subunits alpha(3) and beta(3)) - the catalytic core - and a membrane F(0) domain - the membrane proton channel (subunits c, a, 8, e, f, g, k and j). These two domains are linked by a central stalk (subunits gamma, delta, and epsilon) rotating inside the F1 region and a stationary peripheral stalk (subunits F6, b, d, and OSCP).

It is found in the mitochondrion. The protein localises to the mitochondrion inner membrane. Its function is as follows. Subunit g, of the mitochondrial membrane ATP synthase complex (F(1)F(0) ATP synthase or Complex V) that produces ATP from ADP in the presence of a proton gradient across the membrane which is generated by electron transport complexes of the respiratory chain. ATP synthase complex consist of a soluble F(1) head domain - the catalytic core - and a membrane F(1) domain - the membrane proton channel. These two domains are linked by a central stalk rotating inside the F(1) region and a stationary peripheral stalk. During catalysis, ATP synthesis in the catalytic domain of F(1) is coupled via a rotary mechanism of the central stalk subunits to proton translocation. In vivo, can only synthesize ATP although its ATP hydrolase activity can be activated artificially in vitro. Part of the complex F(0) domain. The chain is ATP synthase F(0) complex subunit g, mitochondrial from Pongo abelii (Sumatran orangutan).